The primary structure comprises 642 residues: MTLLESVQSPADVKRLEHGELAKLAAEIRSFLIEKVSRTGGHLGPNLGAIELTLAVHRVFDSPRDAVVFDTGHQAYVHKIVTGRQSGFDRLRKRDGISGYPSRAESEHDLVENSHASTALSYADGLARAFQLGSEQRHVVAVVGDGALTGGMCWEALNNIAADPDRPVVIVVNDNGRSYAPTIGGLAEHLAGLRLKPGYERALESGRRTLQNLPVVGRSLYTGLHAAKSGIKDALSPQVMFSDLGIKYLGPVDGHDLRSMEQALSMAKAFGGPVIVHAVTRKGNGFAPAENDVAEQMHQVKVIDPETGIPTKPAPKIWTDVYSDELVRIGAEREDVVAITAAMLGPTGLDKFAAAYPERCYDVGIAEQHAMTSAAGMAMGGLHPVFAVYSTFLNRAFDQLLMDVALHRQPVTVTLDRSGITGDDGASHNGMWDLSILGAIPGIQVAAPRDAVTLREELREAVAVDDGPTVMRFPKGSVIEEVPAVERIGGVDVLSKPASDERSEVLLAAVGAFGQLGVAVAERLAAQGIGVTVVDPRWVVPVPQAVLDLAARHSLVVTLEDCGRHGGFGWSLAAAMRDQEIDVPLRDLAVPNRFLQHASRDEVLSDLGLTEQDIARRITEWVAGRLTPVVVGNGRGETATGA.

Thiamine diphosphate contacts are provided by residues histidine 73 and 114 to 116 (SHA). Residue aspartate 145 participates in Mg(2+) binding. Thiamine diphosphate contacts are provided by residues 146-147 (GA), asparagine 175, phenylalanine 286, and glutamate 367. Mg(2+) is bound at residue asparagine 175.

This sequence belongs to the transketolase family. DXPS subfamily. In terms of assembly, homodimer. Mg(2+) serves as cofactor. The cofactor is thiamine diphosphate.

The catalysed reaction is D-glyceraldehyde 3-phosphate + pyruvate + H(+) = 1-deoxy-D-xylulose 5-phosphate + CO2. Its pathway is metabolic intermediate biosynthesis; 1-deoxy-D-xylulose 5-phosphate biosynthesis; 1-deoxy-D-xylulose 5-phosphate from D-glyceraldehyde 3-phosphate and pyruvate: step 1/1. Its function is as follows. Catalyzes the acyloin condensation reaction between C atoms 2 and 3 of pyruvate and glyceraldehyde 3-phosphate to yield 1-deoxy-D-xylulose-5-phosphate (DXP). The protein is 1-deoxy-D-xylulose-5-phosphate synthase of Saccharopolyspora erythraea (strain ATCC 11635 / DSM 40517 / JCM 4748 / NBRC 13426 / NCIMB 8594 / NRRL 2338).